The primary structure comprises 228 residues: Small ribosomal subunit protein uS7m (228 aa).

A mitochondrion-targeting transit peptide spans 1-33 (MAASVRHLLKPWTPSLCLMRWSRYNPYYLDPEP).

This sequence belongs to the universal ribosomal protein uS7 family. Component of the mitochondrial ribosome small subunit (28S) which comprises a 12S rRNA and about 30 distinct proteins.

Its subcellular location is the mitochondrion. The protein is Small ribosomal subunit protein uS7m (mrps7) of Danio rerio (Zebrafish).